Reading from the N-terminus, the 1376-residue chain is YLP motif-containing protein 1 (1376 aa).

Disordered stretches follow at residues 1-335 and 511-1058; these read MYPN…PEED and STIP…PPGR. Residues 14-27 show a composition bias toward pro residues; the sequence is YPPPPVPPPPPPVA. Low complexity-rich tracts occupy residues 31 to 50 and 59 to 80; these read ASPGPGYSSSTAPAAPSSSG and LAQLQQLQQMHQKQMQCVLQPH. 5 stretches are compositionally biased toward pro residues: residues 81–93, 102–114, 148–158, 166–176, and 184–204; these read HLPPPPLPPPPVM, QPPPPPMPPPPGP, PESPPVPPGSY, MPPPQPPPSYY, and YLPPAQPSPSKPQLPPPPPSI. Polar residues-rich tracts occupy residues 207–216 and 238–260; these read GNKTTIQQEP and STMTPQEQQQYWYRQHLLSLQQR. The span at 261 to 271 shows a compositional bias: basic residues; that stretch reads TKVHLPGHKKG. The segment covering 277 to 286 has biased composition (basic and acidic residues); sequence DVPEPIKEEA. Composition is skewed to pro residues over residues 303 to 320, 511 to 537, 545 to 594, and 632 to 641; these read PPLPPPNEEMPPPLPPEE, STIPPPGMPPPVMPPSLPTSVPPPGMP, LPPP…PQGM, and PPSPYHPPPQ. Residues 642-671 show a composition bias toward polar residues; it reads SEQGNSKPLNKVFSSEQGLGESSSALSQSV. An N6-methyllysine modification is found at K675. Basic and acidic residues predominate over residues 698–714; the sequence is RGPREQKEQLQKLKDFG. Composition is skewed to pro residues over residues 738-753, 773-796, and 840-870; these read MYPPPGSYRPPPPMGK, TRPPVPIPPPPPPPPPPPPPPPVI, and PVLPPPPVHPSIPPPGPMPMGMPPMSKPPPV. K886 participates in a covalent cross-link: Glycyl lysine isopeptide (Lys-Gly) (interchain with G-Cter in SUMO2). Composition is skewed to basic and acidic residues over residues 896–930, 937–1004, 1013–1023, and 1039–1058; these read ITLRPDPLPERSAFDADHAGQRDRYDRDRDREPYF, TDHR…DRPP, GERRTYPEERM, and RVEKKPESKNVDDILKPPGR. K943 is covalently cross-linked (Glycyl lysine isopeptide (Lys-Gly) (interchain with G-Cter in SUMO2)). The involved in interaction with PPP1CA stretch occupies residues 1326–1333; sequence KKRVRWAD.

Interacts with PPP1CA and NCOA5. Forms a complex with ILF2, ILF3, KHDRBS1, RBMX, NCOA5 and PPP1CA. High level expression seen in the brain, adipose tissue, heart and kidney, with a low level expression in muscle, spleen and lung (at protein level).

The protein localises to the nucleus. It is found in the nucleus speckle. In terms of biological role, plays a role in the reduction of telomerase activity during differentiation of embryonic stem cells by binding to the core promoter of TERT and controlling its down-regulation. This Rattus norvegicus (Rat) protein is YLP motif-containing protein 1 (Ylpm1).